The following is a 318-amino-acid chain: Ficolin-1-B (318 aa).

The N-terminal stretch at 1–19 is a signal peptide; that stretch reads MTRWVQTFLLLVAVIRSYA. Residues 42-99 enclose the Collagen-like domain; the sequence is GCPGIPGVPGPQGPSGPAGAKGEKGFPGIPGKMGPTGLKGERGISGPKGQKGDKGDPG. A Fibrinogen C-terminal domain is found at 100 to 318; that stretch reads IPVVGMAQNC…VSEIKFRPQP (219 aa). A disulfide bridge links C109 with C137. N205 and N222 each carry an N-linked (GlcNAc...) asparagine glycan. Residue D253 coordinates Ca(2+). N-linked (GlcNAc...) asparagine glycosylation is present at N254. Residues D255 and S257 each contribute to the Ca(2+) site. C261 and C274 are joined by a disulfide. An a carbohydrate-binding site is contributed by 273–275; it reads SCH. An N-linked (GlcNAc...) asparagine glycan is attached at N287.

This sequence belongs to the ficolin lectin family. In terms of assembly, homotrimer. May form higher-order oligomers. In terms of processing, N-glycosylated. In terms of tissue distribution, expressed in peripheral blood leukocytes. Also detected at lower levels in spleen and lung.

It localises to the secreted. In terms of biological role, may function in innate immunity through activation of the lectin complement pathway. Binds to GalNAc and GlcNAc carbohydrate moieties. This Xenopus laevis (African clawed frog) protein is Ficolin-1-B.